Reading from the N-terminus, the 505-residue chain is Alpha-internexin (505 aa).

The tract at residues 1-87 (MSFGSEHYLC…SQAAARTNEY (87 aa)) is head. Ser72 is subject to Phosphoserine. Positions 88–129 (KIIRTNEKEQLQGLNDRFAVFIEKVHQLETQNRALEAELAAL) are coil 1A. Residues 94–407 (EKEQLQGLND…KLLEGEETRF (314 aa)) form the IF rod domain. The interval 130–142 (RQRHAEPSRVGEL) is linker 1. Residues 143–238 (FQRELRELRA…QVHDEEVAEL (96 aa)) are coil 1B. A Phosphoserine modification is found at Ser219. The linker 2 stretch occupies residues 239 to 262 (LATLQASSQAAAEVDVAVAKPDLT). A coil 2 region spans residues 263–408 (SALREIRAQY…LLEGEETRFS (146 aa)). N6-acetyllysine is present on Lys290. Ser335, Ser474, and Ser502 each carry phosphoserine. The tract at residues 409–505 (TSGLSISGLN…EITTSSSQKM (97 aa)) is tail. Residues 438-505 (KVSSAGLSLK…EITTSSSQKM (68 aa)) are disordered. The segment covering 495–505 (EEITTSSSQKM) has biased composition (low complexity).

The protein belongs to the intermediate filament family. In terms of assembly, forms homodimers (in vitro). Forms heterodimers with NEFL, NEFM or NEFH (in vitro). Post-translationally, O-glycosylated. As to expression, expressed in the dorsal root ganglion neurons (at protein level).

Functionally, class-IV neuronal intermediate filament that is able to self-assemble. It is involved in the morphogenesis of neurons. It may form an independent structural network without the involvement of other neurofilaments or it may cooperate with NEFL to form the filamentous backbone to which NEFM and NEFH attach to form the cross-bridges. May also cooperate with the neuronal intermediate filament protein PRPH to form filamentous networks. The sequence is that of Alpha-internexin (Ina) from Rattus norvegicus (Rat).